A 208-amino-acid chain; its full sequence is UPF0637 protein BCAH820_3975 (208 aa).

It belongs to the UPF0637 family.

The chain is UPF0637 protein BCAH820_3975 from Bacillus cereus (strain AH820).